The chain runs to 345 residues: Fe(3+) ions import ATP-binding protein FbpC (345 aa).

Residues 4-236 (LELHGIGKSY…PVDEPTASFL (233 aa)) form the ABC transporter domain. 36–43 (GPSGSGKT) contacts ATP.

The protein belongs to the ABC transporter superfamily. Fe(3+) ion importer (TC 3.A.1.10) family. As to quaternary structure, the complex is composed of two ATP-binding proteins (FbpC), two transmembrane proteins (FbpB) and a solute-binding protein (FbpA).

The protein resides in the cell inner membrane. It catalyses the reaction Fe(3+)(out) + ATP + H2O = Fe(3+)(in) + ADP + phosphate + H(+). In terms of biological role, part of the ABC transporter complex FbpABC involved in Fe(3+) ions import. Responsible for energy coupling to the transport system. In Serratia marcescens, this protein is Fe(3+) ions import ATP-binding protein FbpC.